The chain runs to 368 residues: Spermidine/putrescine import ATP-binding protein PotA (368 aa).

The 231-residue stretch at V6 to I236 folds into the ABC transporter domain. An ATP-binding site is contributed by G38–T45.

It belongs to the ABC transporter superfamily. Spermidine/putrescine importer (TC 3.A.1.11.1) family. In terms of assembly, the complex is composed of two ATP-binding proteins (PotA), two transmembrane proteins (PotB and PotC) and a solute-binding protein (PotD).

It localises to the cell inner membrane. The enzyme catalyses ATP + H2O + polyamine-[polyamine-binding protein]Side 1 = ADP + phosphate + polyamineSide 2 + [polyamine-binding protein]Side 1.. Functionally, part of the ABC transporter complex PotABCD involved in spermidine/putrescine import. Responsible for energy coupling to the transport system. This chain is Spermidine/putrescine import ATP-binding protein PotA, found in Thermotoga maritima (strain ATCC 43589 / DSM 3109 / JCM 10099 / NBRC 100826 / MSB8).